The sequence spans 102 residues: Inner membrane protein YaiY (102 aa).

Residues 1 to 24 are Cytoplasmic-facing; it reads MADFTLSKSLFSGKYRNASSTPGN. The chain crosses the membrane as a helical span at residues 25 to 45; it reads IAYALFVLFCFWAGAQLLNLL. The Periplasmic segment spans residues 46–74; the sequence is VHAPGVYERLMQVQETGRPRVEIGLGVGT. Residues 75–95 form a helical membrane-spanning segment; the sequence is IFGLIPFLVGCLIFAVVALWL. At 96 to 102 the chain is on the cytoplasmic side; that stretch reads HWRHRRQ.

The protein resides in the cell inner membrane. This Escherichia coli O157:H7 protein is Inner membrane protein YaiY (yaiY).